Reading from the N-terminus, the 198-residue chain is NADH-quinone oxidoreductase subunit B (198 aa).

C62, C63, C128, and C158 together coordinate [4Fe-4S] cluster.

The protein belongs to the complex I 20 kDa subunit family. NDH-1 is composed of 14 different subunits. Subunits NuoB, C, D, E, F, and G constitute the peripheral sector of the complex. The cofactor is [4Fe-4S] cluster.

Its subcellular location is the cell inner membrane. The catalysed reaction is a quinone + NADH + 5 H(+)(in) = a quinol + NAD(+) + 4 H(+)(out). NDH-1 shuttles electrons from NADH, via FMN and iron-sulfur (Fe-S) centers, to quinones in the respiratory chain. The immediate electron acceptor for the enzyme in this species is believed to be a menaquinone. Couples the redox reaction to proton translocation (for every two electrons transferred, four hydrogen ions are translocated across the cytoplasmic membrane), and thus conserves the redox energy in a proton gradient. In Phocaeicola vulgatus (strain ATCC 8482 / DSM 1447 / JCM 5826 / CCUG 4940 / NBRC 14291 / NCTC 11154) (Bacteroides vulgatus), this protein is NADH-quinone oxidoreductase subunit B.